Reading from the N-terminus, the 468-residue chain is FAD-linked oxidoreductase azaG (468 aa).

A signal peptide spans 1-16; that stretch reads MQLSGILSWLLSWLWA. An N-linked (GlcNAc...) asparagine glycan is attached at N44. Residues 54–228 enclose the FAD-binding PCMH-type domain; that stretch reads TVHGAPHYLG…TSATYRTHQA (175 aa). N-linked (GlcNAc...) asparagine glycosylation is found at N272, N348, and N464.

The protein belongs to the oxygen-dependent FAD-linked oxidoreductase family. Requires FAD as cofactor.

The protein operates within secondary metabolite biosynthesis. Functionally, FAD-linked oxidoreductase; part of the gene cluster that mediates the biosynthesis of azaphilones, a class of fungal metabolites characterized by a highly oxygenated pyrano-quinone bicyclic core and exhibiting a broad range of bioactivities. In the first step, the non-reducing polyketide synthase azaA forms the hexaketide precursor from successive condensations of five malonyl-CoA units, presumably with a simple acetyl-CoA starter unit. The reactive polyketide chain then undergoes a PT-mediated C2-C7 cyclization to afford the aromatic ring and is eventually released as an aldehyde through the R-domain. The putative ketoreductase azaE is proposed to catalyze the reduction of the terminal ketone resulting in the early culture product FK17-P2a. The monooxygenase azaH was demonstrated to be the only enzyme required to convert FK17-P2a to azanigerone E. AzaH first hydroxylates the benzaldehyde intermediate FK17-P2a at C4, which triggers the formation of the pyran-ring to afford azanigerone E. In parallel, the 2,4-dimethylhexanoyl chain is synthesized by the HR-PKS azaB and is proposed to be transferred to the C4-hydroxyl of azanigerone E by the acyltransferase azaD directly from the ACP domain of azaB. Alternatively, the 2,4-dimethyl-hexanoyl chain may be offloaded from the HR-PKS as a carboxylic acid and converted to an acyl-CoA by azaF. The resulting acyl-CoA molecule could then be taken up as a substrate by AzaD to form azanigerone B. To yield the carboxylic acid substituent in azanigerone A, the hydroxypropyl side chain of azanigerone B would need to undergo a C-C oxidative cleavage catalyzed by cytochrome P450 AzaI. AzaI is proposed to act on a vicinal diol that leads to a C-C bond scission either through an alkoxyradical intermediate or a peroxy complex. In the biosynthesis of azanigerone A, azanigerone B first undergoes hydroxylation at C10, possibly catalyzed by one of the two FAD-dependent monooxygenases encoded in the cluster, azaG or azaL, resulting in the vicinal diol azanigerone C. Oxidative cleavage of azanigerone C by azaI would yield the corresponding aldehyde derivative of azanigerone A. Finally, the dehydrogenase azaJ is proposed to convert the aldehyde functional group into the carboxylic acid, completing the conversion from azanigerone B to azanigerone A. Alternatively, the oxidation of aldehyde to carboxylic acid may be catalyzed by the same P450 enzyme azaI via consecutive oxidation or by endogenous alcohol dehydrogenase. The chain is FAD-linked oxidoreductase azaG from Aspergillus niger (strain ATCC 1015 / CBS 113.46 / FGSC A1144 / LSHB Ac4 / NCTC 3858a / NRRL 328 / USDA 3528.7).